The following is a 125-amino-acid chain: Small ribosomal subunit protein uS13 (125 aa).

This sequence belongs to the universal ribosomal protein uS13 family. In terms of assembly, part of the 30S ribosomal subunit. Forms a loose heterodimer with protein S19. Forms two bridges to the 50S subunit in the 70S ribosome.

In terms of biological role, located at the top of the head of the 30S subunit, it contacts several helices of the 16S rRNA. In the 70S ribosome it contacts the 23S rRNA (bridge B1a) and protein L5 of the 50S subunit (bridge B1b), connecting the 2 subunits; these bridges are implicated in subunit movement. Contacts the tRNAs in the A and P-sites. The protein is Small ribosomal subunit protein uS13 of Granulibacter bethesdensis (strain ATCC BAA-1260 / CGDNIH1).